Consider the following 238-residue polypeptide: Ribosomal RNA small subunit methyltransferase G (238 aa).

S-adenosyl-L-methionine contacts are provided by residues G77, F82, A128–E129, and R147.

This sequence belongs to the methyltransferase superfamily. RNA methyltransferase RsmG family.

It is found in the cytoplasm. Functionally, specifically methylates the N7 position of guanine in position 535 of 16S rRNA. This is Ribosomal RNA small subunit methyltransferase G from Brevibacillus brevis (strain 47 / JCM 6285 / NBRC 100599).